Reading from the N-terminus, the 706-residue chain is Gamma-adducin (706 aa).

Positions 1–10 (MSSDASQGVI) are enriched in polar residues. Positions 1–20 (MSSDASQGVITTPPPPSMPH) are disordered. Residue serine 2 is modified to N-acetylserine. Phosphoserine occurs at positions 42, 64, 402, 414, 423, 442, and 461. 4 disordered regions span residues 471 to 497 (AEDSSKVSGGTPIKIEDPNQFVPLNTN), 535 to 555 (PSTMQFEDDDHGPPAPPNPFS), 575 to 610 (GLEDAEQELLSDDASSVSQIQSQTQSPQNVPEKLEE), and 666 to 706 (EKIE…KVEA). Residue lysine 484 forms a Glycyl lysine isopeptide (Lys-Gly) (interchain with G-Cter in SUMO2) linkage. Serine 585, serine 590, serine 673, serine 677, serine 679, serine 681, and serine 683 each carry phosphoserine. Over residues 589 to 602 (SSVSQIQSQTQSPQ) the composition is skewed to low complexity. A compositionally biased stretch (basic residues) spans 682-706 (PSKKKKKFRTPSFLKKNKKKEKVEA). The segment at 684 to 701 (KKKKKFRTPSFLKKNKKK) is interaction with calmodulin.

Belongs to the aldolase class II family. Adducin subfamily. Heterodimer of an alpha and a gamma subunit. Sumoylated. In terms of processing, proteolytically cleaved by asparagine endopeptidase (AEP) into 2 fragments. Overexpression of the 1-357 fragment induces neuronal apoptosis, and overexpression of either 1-357 or 358-706 fragment increases the degeneration of dendritic spines. Overexpression of the 1-357 fragment impairs neurite outgrowth by downregulating the expression of Rac2, and induces synaptic dysfunction and cognitive impairments in tau P301S transgenic mice, a mouse model for Alzheimer disease (AD). Ubiquitously expressed. As to expression, cleavage fragment 1-357 is abundantly expressed in the brain of patients with Alzheimer disease (AD), but hardly detectable in age-matched control individuals (at protein level).

The protein localises to the cytoplasm. Its subcellular location is the cytoskeleton. It localises to the cell membrane. In terms of biological role, membrane-cytoskeleton-associated protein that promotes the assembly of the spectrin-actin network. Plays a role in actin filament capping. Binds to calmodulin. Involved in myogenic reactivity of the renal afferent arteriole (Af-art), renal interlobular arteries and middle cerebral artery (MCA) to increased perfusion pressure. Involved in regulation of potassium channels in the vascular smooth muscle cells (VSMCs) of the Af-art and MCA ex vivo. Involved in regulation of glomerular capillary pressure, glomerular filtration rate (GFR) and glomerular nephrin expression in response to hypertension. Involved in renal blood flow (RBF) autoregulation. Plays a role in podocyte structure and function. Regulates globular monomer actin (G-actin) and filamentous polymer actin (F-actin) ratios in the primary podocytes affecting actin cytoskeleton organization. Regulates expression of synaptopodin, RhoA, Rac1 and CDC42 in the renal cortex and the primary podocytes. Regulates expression of nephrin in the glomeruli and in the primary podocytes, expression of nephrin and podocinin in the renal cortex, and expression of focal adhesion proteins integrin alpha-3 and integrin beta-1 in the glomeruli. Involved in cell migration and cell adhesion of podocytes, and in podocyte foot process effacement. Regulates expression of profibrotics markers MMP2, MMP9, TGF beta-1, tubular tight junction protein E-cadherin, and mesenchymal markers vimentin and alpha-SMA. Promotes the growth of neurites. The chain is Gamma-adducin (ADD3) from Homo sapiens (Human).